Here is an 85-residue protein sequence, read N- to C-terminus: Conotoxin Lt28.5 (85 aa).

A signal peptide spans 1–21 (MPKLEMMLLVLLILPLCYIDA). Residues 22–40 (VGPPPPWNMEDEIIEHWQK) constitute a propeptide that is removed on maturation.

Belongs to the conotoxin D superfamily. Post-translationally, contains 5 disulfide bonds. Expressed by the venom duct.

It is found in the secreted. Functionally, probable neurotoxin. In Conus litteratus (Lettered cone), this protein is Conotoxin Lt28.5.